We begin with the raw amino-acid sequence, 42 residues long: Purine nucleoside phosphorylase DeoD-type (42 aa).

An a purine D-ribonucleoside-binding site is contributed by 8-9; sequence SD. The active-site Proton donor is D9.

The protein belongs to the PNP/UDP phosphorylase family. As to quaternary structure, homohexamer; trimer of homodimers.

The catalysed reaction is a purine D-ribonucleoside + phosphate = a purine nucleobase + alpha-D-ribose 1-phosphate. The enzyme catalyses a purine 2'-deoxy-D-ribonucleoside + phosphate = a purine nucleobase + 2-deoxy-alpha-D-ribose 1-phosphate. In terms of biological role, catalyzes the reversible phosphorolytic breakdown of the N-glycosidic bond in the beta-(deoxy)ribonucleoside molecules, with the formation of the corresponding free purine bases and pentose-1-phosphate. The chain is Purine nucleoside phosphorylase DeoD-type from Mycoplasmoides pirum (Mycoplasma pirum).